Consider the following 153-residue polypeptide: 3-hydroxyacyl-[acyl-carrier-protein] dehydratase FabZ (153 aa).

The active site involves His54.

The protein belongs to the thioester dehydratase family. FabZ subfamily.

The protein localises to the cytoplasm. It catalyses the reaction a (3R)-hydroxyacyl-[ACP] = a (2E)-enoyl-[ACP] + H2O. Involved in unsaturated fatty acids biosynthesis. Catalyzes the dehydration of short chain beta-hydroxyacyl-ACPs and long chain saturated and unsaturated beta-hydroxyacyl-ACPs. In Chlamydia trachomatis serovar L2 (strain ATCC VR-902B / DSM 19102 / 434/Bu), this protein is 3-hydroxyacyl-[acyl-carrier-protein] dehydratase FabZ.